The sequence spans 236 residues: tRNA (guanine-N(7)-)-methyltransferase (236 aa).

S-adenosyl-L-methionine-binding residues include D35, E60, N87, and D113. Residue D113 is part of the active site. Residues K117 and D149 each contribute to the substrate site. A disordered region spans residues 217-236 (EFEQHWQEIDNPGNAPTPDA).

This sequence belongs to the class I-like SAM-binding methyltransferase superfamily. TrmB family.

It carries out the reaction guanosine(46) in tRNA + S-adenosyl-L-methionine = N(7)-methylguanosine(46) in tRNA + S-adenosyl-L-homocysteine. The protein operates within tRNA modification; N(7)-methylguanine-tRNA biosynthesis. Functionally, catalyzes the formation of N(7)-methylguanine at position 46 (m7G46) in tRNA. The sequence is that of tRNA (guanine-N(7)-)-methyltransferase from Synechococcus sp. (strain CC9902).